A 364-amino-acid polypeptide reads, in one-letter code: Geissoschizine synthase (364 aa).

The Enoyl reductase (ER) domain maps to 24–343 (GILHPIKFSR…DYLSTAMERI (320 aa)). Position 51 (C51) interacts with Zn(2+). NADP(+) is bound at residue N52. Zn(2+) contacts are provided by H73, E74, C104, C107, C110, C118, and C168. NADP(+)-binding residues include L194, G196, L197, S216, T217, S218, K221, R261, V280, A282, S304, T306, and R351.

It belongs to the zinc-containing alcohol dehydrogenase family. Class-III subfamily. As to quaternary structure, homodimer. Zn(2+) serves as cofactor.

It catalyses the reaction (19E)-geissoschizine + NADP(+) = 4,21-dehydrogeissoschizine + NADPH. It carries out the reaction (19E)-geissoschizine + NADPH + H(+) = (16R,19E)-isositsirikine + NADP(+). The enzyme catalyses (19E)-geissoschizine + NADPH + H(+) = (16R,19Z)-isositsirikine + NADP(+). It participates in alkaloid biosynthesis. In terms of biological role, an alcohol dehydrogenase involved in the biosynthesis of seco-iridoid and derivatives monoterpenoid indole alkaloids natural products. Catalyzes the production of geissoschizine and its conversion to (16R)-E-isositsirikine and (16R)-Z-isositsirikine. This chain is Geissoschizine synthase, found in Alstonia scholaris (Dogbane).